The following is a 379-amino-acid chain: dTDP-3-amino-3,4,6-trideoxy-alpha-D-glucose transaminase (379 aa).

Pyridoxal 5'-phosphate contacts are provided by residues Gly67, Gln167, 188-193, Tyr221, Tyr227, 235-237, and Tyr318; these read SFYPGK and NSR. Lys193 carries the post-translational modification N6-(pyridoxal phosphate)lysine.

The protein belongs to the degT/dnrJ/eryC1 family. As to quaternary structure, homodimer. The cofactor is pyridoxal 5'-phosphate.

The catalysed reaction is dTDP-3-amino-3,4,6-trideoxy-alpha-D-glucose + 2-oxoglutarate = dTDP-3-dehydro-4,6-dideoxy-alpha-D-glucose + L-glutamate. It functions in the pathway antibiotic biosynthesis. Its function is as follows. Involved in the biosynthesis of dTDP-alpha-D-desosamine, a sugar found in several bacterial macrolide antibiotics. Catalyzes the reversible transfer of the amino group from L-glutamate to the C-3 position of dTDP-3-keto-4,6-deoxyglucose to yield dTDP-3-amino-3,4,6-trideoxyglucose. This chain is dTDP-3-amino-3,4,6-trideoxy-alpha-D-glucose transaminase, found in Streptomyces venezuelae.